The sequence spans 120 residues: MDKNEFLKKLDEKFKESEQKNLEALEKIRSNLPQLEIEIFGEKLTAIIPPLSVEKEMIEDAKNLEPLDFALKYIPILYGIPKEKVEELPSIVIAELIKKYFEAYKQLNKDKSFRNRVGTK.

This is an uncharacterized protein from Methanocaldococcus jannaschii (strain ATCC 43067 / DSM 2661 / JAL-1 / JCM 10045 / NBRC 100440) (Methanococcus jannaschii).